A 206-amino-acid polypeptide reads, in one-letter code: Octanoyltransferase (206 aa).

The BPL/LPL catalytic domain maps to P30–I206. Residues R69–H76, S137–G139, and G150–A152 contribute to the substrate site. C168 functions as the Acyl-thioester intermediate in the catalytic mechanism.

This sequence belongs to the LipB family.

It is found in the cytoplasm. It carries out the reaction octanoyl-[ACP] + L-lysyl-[protein] = N(6)-octanoyl-L-lysyl-[protein] + holo-[ACP] + H(+). The protein operates within protein modification; protein lipoylation via endogenous pathway; protein N(6)-(lipoyl)lysine from octanoyl-[acyl-carrier-protein]: step 1/2. In terms of biological role, catalyzes the transfer of endogenously produced octanoic acid from octanoyl-acyl-carrier-protein onto the lipoyl domains of lipoate-dependent enzymes. Lipoyl-ACP can also act as a substrate although octanoyl-ACP is likely to be the physiological substrate. The polypeptide is Octanoyltransferase (Francisella tularensis subsp. holarctica (strain FTNF002-00 / FTA)).